The chain runs to 686 residues: Phosphomethylpyrimidine synthase (686 aa).

Residues asparagine 235, methionine 264, tyrosine 293, histidine 329, 349–351 (SRG), 390–393 (DGMR), and glutamate 429 contribute to the substrate site. Residue histidine 433 participates in Zn(2+) binding. Position 456 (tyrosine 456) interacts with substrate. Position 497 (histidine 497) interacts with Zn(2+). The [4Fe-4S] cluster site is built by cysteine 577, cysteine 580, and cysteine 585. Positions 659–686 (IDSSGINDNKNDQQDASVVRVPSLEIEG) are disordered.

Belongs to the ThiC family. As to quaternary structure, homodimer. [4Fe-4S] cluster is required as a cofactor.

The enzyme catalyses 5-amino-1-(5-phospho-beta-D-ribosyl)imidazole + S-adenosyl-L-methionine = 4-amino-2-methyl-5-(phosphooxymethyl)pyrimidine + CO + 5'-deoxyadenosine + formate + L-methionine + 3 H(+). It functions in the pathway cofactor biosynthesis; thiamine diphosphate biosynthesis. Catalyzes the synthesis of the hydroxymethylpyrimidine phosphate (HMP-P) moiety of thiamine from aminoimidazole ribotide (AIR) in a radical S-adenosyl-L-methionine (SAM)-dependent reaction. The sequence is that of Phosphomethylpyrimidine synthase from Shewanella denitrificans (strain OS217 / ATCC BAA-1090 / DSM 15013).